Reading from the N-terminus, the 294-residue chain is Phosphatidylserine decarboxylase proenzyme (294 aa).

Residues aspartate 88, histidine 145, and serine 248 each act as charge relay system; for autoendoproteolytic cleavage activity in the active site. The Schiff-base intermediate with substrate; via pyruvic acid; for decarboxylase activity role is filled by serine 248. At serine 248 the chain carries Pyruvic acid (Ser); by autocatalysis.

It belongs to the phosphatidylserine decarboxylase family. PSD-B subfamily. Prokaryotic type I sub-subfamily. Heterodimer of a large membrane-associated beta subunit and a small pyruvoyl-containing alpha subunit. The cofactor is pyruvate. Is synthesized initially as an inactive proenzyme. Formation of the active enzyme involves a self-maturation process in which the active site pyruvoyl group is generated from an internal serine residue via an autocatalytic post-translational modification. Two non-identical subunits are generated from the proenzyme in this reaction, and the pyruvate is formed at the N-terminus of the alpha chain, which is derived from the carboxyl end of the proenzyme. The autoendoproteolytic cleavage occurs by a canonical serine protease mechanism, in which the side chain hydroxyl group of the serine supplies its oxygen atom to form the C-terminus of the beta chain, while the remainder of the serine residue undergoes an oxidative deamination to produce ammonia and the pyruvoyl prosthetic group on the alpha chain. During this reaction, the Ser that is part of the protease active site of the proenzyme becomes the pyruvoyl prosthetic group, which constitutes an essential element of the active site of the mature decarboxylase.

Its subcellular location is the cell membrane. The catalysed reaction is a 1,2-diacyl-sn-glycero-3-phospho-L-serine + H(+) = a 1,2-diacyl-sn-glycero-3-phosphoethanolamine + CO2. Its pathway is phospholipid metabolism; phosphatidylethanolamine biosynthesis; phosphatidylethanolamine from CDP-diacylglycerol: step 2/2. Functionally, catalyzes the formation of phosphatidylethanolamine (PtdEtn) from phosphatidylserine (PtdSer). The chain is Phosphatidylserine decarboxylase proenzyme from Herminiimonas arsenicoxydans.